A 380-amino-acid chain; its full sequence is DNA-directed RNA polymerase subunit Rpo1C (380 aa).

The protein belongs to the RNA polymerase beta' chain family. In terms of assembly, part of the RNA polymerase complex.

The protein resides in the cytoplasm. It carries out the reaction RNA(n) + a ribonucleoside 5'-triphosphate = RNA(n+1) + diphosphate. Functionally, DNA-dependent RNA polymerase (RNAP) catalyzes the transcription of DNA into RNA using the four ribonucleoside triphosphates as substrates. Forms part of the jaw domain. The chain is DNA-directed RNA polymerase subunit Rpo1C from Archaeoglobus fulgidus (strain ATCC 49558 / DSM 4304 / JCM 9628 / NBRC 100126 / VC-16).